The sequence spans 293 residues: Large ribosomal RNA subunit accumulation protein YCED homolog 1, chloroplastic (293 aa).

A chloroplast-targeting transit peptide spans 1-42; the sequence is MYYPQPTVSLAAAVALLRPSLRRHSQRASSLLRSSTPPPWVS.

It belongs to the DUF177 domain family. In terms of tissue distribution, highly expressed in shoots and leaves. Detected in roots, embryos and endosperm.

The protein resides in the plastid. The protein localises to the chloroplast. In terms of biological role, plays a role in synthesis, processing and/or stability of 23S rRNA. Required for embryogenesis. May be involved in RPL23 transcript levels regulation in non-photosynthetic plastids. The polypeptide is Large ribosomal RNA subunit accumulation protein YCED homolog 1, chloroplastic (Zea mays (Maize)).